Here is a 106-residue protein sequence, read N- to C-terminus: UPF0145 protein Daci_3728 (106 aa).

This sequence belongs to the UPF0145 family.

The protein is UPF0145 protein Daci_3728 of Delftia acidovorans (strain DSM 14801 / SPH-1).